Consider the following 104-residue polypeptide: MSTYAIIKTGGKQVKVEVGQAIYVEKLNAEAGQDVTFDEVVLVGGENTVVGTPLVAGASVVGTVEKQGKQKKVVTYKYKPKKGSHRKQGHRQPYTKVVINAINA.

It belongs to the bacterial ribosomal protein bL21 family. Part of the 50S ribosomal subunit. Contacts protein L20.

Functionally, this protein binds to 23S rRNA in the presence of protein L20. The chain is Large ribosomal subunit protein bL21 from Streptococcus sanguinis (strain SK36).